The chain runs to 238 residues: tRNA (guanine-N(1)-)-methyltransferase (238 aa).

S-adenosyl-L-methionine contacts are provided by residues Gly-110 and 129-134 (LGDFIL).

Belongs to the RNA methyltransferase TrmD family. Homodimer.

It is found in the cytoplasm. It carries out the reaction guanosine(37) in tRNA + S-adenosyl-L-methionine = N(1)-methylguanosine(37) in tRNA + S-adenosyl-L-homocysteine + H(+). Functionally, specifically methylates guanosine-37 in various tRNAs. In Clostridium botulinum (strain Eklund 17B / Type B), this protein is tRNA (guanine-N(1)-)-methyltransferase.